Here is a 122-residue protein sequence, read N- to C-terminus: Mth938 domain-containing protein (122 aa).

Residues 6 to 122 (IASLSWGQMK…RVGGVFHSTC (117 aa)) are MTH138-like domain.

The protein belongs to the AAMDC family.

It localises to the cytoplasm. Its function is as follows. May play a role in preadipocyte differentiation and adipogenesis. This is Mth938 domain-containing protein (AAMDC) from Bos taurus (Bovine).